Here is a 747-residue protein sequence, read N- to C-terminus: MVNQQTLTLRGMGCAACAGRIEALIQALPGVQECSVNFGAEQAQVCYDPALTQVAAIQAAIEAAGYHAFPLQDPWDNEVEAQERHRRARSQRQLAQRVWVSGLIASLLVIGSLPMMLGISIPGIPMWLHHPGLQLGLTLPVLWAGRSFFINAWKAFRQNTATMDTLVAVGTGAAFLYSLAVTLFPQWLTRQGLPPDVYYEAIAVIIALLLLGRSLEERAKGQTSAAIRQLIGLQAKTARVLRQGQELTLPITEVQVEDWVRVRPGEKVPVDGEVIDGRSTVDESMVTGESLPVQKQVGDEVIGATLNKTGSLTIRATRVGRETFLAQIVQLVQQAQASKAPIQRLADQVTGWFVPAVIAIAILTFVLWFNWIGNVTLALITAVGVLIIACPCALGLATPTSIMVGTGKGAEYGILIKSAESLELAQTIQTVILDKTGTLTQGQPSVTDFLAIGDRDQQQTLLGWAASLENYSEHPLAEAIVRYGEAQGITLSTVTDFEAIPGSGVQGQVEGIWLQIGTQRWLGELGIETSALQNQWEDWEAAGKTVVGVAADGHLQAILSIADQLKPSSVAVVRSLQRLGLQVVMLTGDNRRTADAIAQAVGITQVLAEVRPDQKAAQVAQLQSRGQVVAMVGDGINDAPALAQADVGIAIGTGTDVAIAASDITLISGDLQGIVTAIQLSRATMTNIRQNLFFAFIYNVAGIPIAAGILYPLLGWLLSPMLAGAAMAFSSVSVVTNALRLRQFQPR.

Topologically, residues 1 to 101 (MVNQQTLTLR…RQLAQRVWVS (101 aa)) are cytoplasmic. The 67-residue stretch at 3–69 (NQQTLTLRGM…AIEAAGYHAF (67 aa)) folds into the HMA domain. Residues Cys14 and Cys17 each coordinate a metal cation. Residues 102–122 (GLIASLLVIGSLPMMLGISIP) traverse the membrane as a helical segment. Residues 123–132 (GIPMWLHHPG) lie on the Extracellular side of the membrane. Residues 133-151 (LQLGLTLPVLWAGRSFFIN) traverse the membrane as a helical segment. Residues 152–158 (AWKAFRQ) lie on the Cytoplasmic side of the membrane. Residues 159–179 (NTATMDTLVAVGTGAAFLYSL) traverse the membrane as a helical segment. Residues 180–199 (AVTLFPQWLTRQGLPPDVYY) are Extracellular-facing. Residues 200–220 (EAIAVIIALLLLGRSLEERAK) form a helical membrane-spanning segment. Topologically, residues 221–348 (GQTSAAIRQL…KAPIQRLADQ (128 aa)) are cytoplasmic. The helical transmembrane segment at 349–371 (VTGWFVPAVIAIAILTFVLWFNW) threads the bilayer. Residues 372–378 (IGNVTLA) are Extracellular-facing. Residues 379–396 (LITAVGVLIIACPCALGL) traverse the membrane as a helical segment. Residues 397 to 688 (ATPTSIMVGT…QLSRATMTNI (292 aa)) lie on the Cytoplasmic side of the membrane. Asp434 functions as the 4-aspartylphosphate intermediate in the catalytic mechanism. Mg(2+) contacts are provided by Asp634 and Asp638. A helical membrane pass occupies residues 689-708 (RQNLFFAFIYNVAGIPIAAG). At 709–720 (ILYPLLGWLLSP) the chain is on the extracellular side. A helical membrane pass occupies residues 721–739 (MLAGAAMAFSSVSVVTNAL). Residues 740-747 (RLRQFQPR) lie on the Cytoplasmic side of the membrane.

This sequence belongs to the cation transport ATPase (P-type) (TC 3.A.3) family. Type IB subfamily.

Its subcellular location is the cell membrane. It carries out the reaction Cu(+)(in) + ATP + H2O = Cu(+)(out) + ADP + phosphate + H(+). Its function is as follows. May play a role in the osmotic adaptation. In Synechococcus elongatus (strain ATCC 33912 / PCC 7942 / FACHB-805) (Anacystis nidulans R2), this protein is Probable copper-transporting ATPase PacS (pacS).